Here is a 270-residue protein sequence, read N- to C-terminus: MSRLQTRFAELKEQNRAALVTFVTAGDPDYDTSLAILKGLPKAGADVIELGMPFTDPMADGPAIQLANIRALGAKQNLTKTLQMVREFREGNSDTPLVLMGYFNPIHKFGVERFIAEAKEAGVDGLIVVDMPPEHNSELCDPAQAAGIDFIRLTTPTTDDARLPKVLNGSSGFVYYVSVAGVTGAGAATLEHVEEAVARLRRHTDLPISIGFGIRTPEQAASIARLADGVVVGSALIDHIANATTPDQAIDGVLSLCSALSEGVRKARVS.

Residues glutamate 49 and aspartate 60 each act as proton acceptor in the active site.

Belongs to the TrpA family. As to quaternary structure, tetramer of two alpha and two beta chains.

The catalysed reaction is (1S,2R)-1-C-(indol-3-yl)glycerol 3-phosphate + L-serine = D-glyceraldehyde 3-phosphate + L-tryptophan + H2O. It functions in the pathway amino-acid biosynthesis; L-tryptophan biosynthesis; L-tryptophan from chorismate: step 5/5. Functionally, the alpha subunit is responsible for the aldol cleavage of indoleglycerol phosphate to indole and glyceraldehyde 3-phosphate. This Pseudomonas fluorescens (strain Pf0-1) protein is Tryptophan synthase alpha chain.